The chain runs to 214 residues: Cell division protein B1 (214 aa).

Functionally, part of a cell division machinery. This is Cell division protein B1 from Sulfolobus acidocaldarius (strain ATCC 33909 / DSM 639 / JCM 8929 / NBRC 15157 / NCIMB 11770).